The sequence spans 240 residues: Phosducin-like protein 2 (240 aa).

The region spanning Q38–A201 is the Phosducin domain. The thioredoxin fold stretch occupies residues F89–K240.

This sequence belongs to the phosducin family. Interacts with the CCT chaperonin complex and actin. In terms of tissue distribution, testis-specific (at protein level).

It localises to the endoplasmic reticulum. In terms of biological role, essential for male fertility, spermiogenesis and acrosome formation. In Mus musculus (Mouse), this protein is Phosducin-like protein 2 (Pdcl2).